Reading from the N-terminus, the 930-residue chain is Zn(2)-C6 fungal-type transcription factor FTF1c (930 aa).

Positions 137 to 164 (CIACRRKKIRCSGEKPACEHCLCSYIPC) form a DNA-binding region, zn(2)-C6 fungal-type.

The protein localises to the nucleus. Zn(2)-C6 fungal-type transcription factor that has a role in the establishment of the fungus within the plant and/or the progress of the disease. Regulates the expression of virulence factors such as SIX1 and SIX6. This chain is Zn(2)-C6 fungal-type transcription factor FTF1c, found in Fusarium oxysporum f. sp. lycopersici (strain 4287 / CBS 123668 / FGSC 9935 / NRRL 34936) (Fusarium vascular wilt of tomato).